The sequence spans 320 residues: Olfactory receptor 2C3 (320 aa).

Residues Met1 to Thr26 are Extracellular-facing. Asn6 carries N-linked (GlcNAc...) asparagine glycosylation. A helical membrane pass occupies residues Val27–Ser50. At His51–Thr58 the chain is on the cytoplasmic side. The chain crosses the membrane as a helical span at residues Pro59 to Pro80. Residues Gln81 to Gln101 are Extracellular-facing. Cys98 and Cys190 are disulfide-bonded. The helical transmembrane segment at Phe102–Tyr121 threads the bilayer. Topologically, residues Asp122–Gln140 are cytoplasmic. Residues Leu141–Val159 traverse the membrane as a helical segment. At Gly160–Asn196 the chain is on the extracellular side. The helical transmembrane segment at Glu197–Gly220 threads the bilayer. Over His221–Lys237 the chain is Cytoplasmic. Residues Ala238 to Tyr260 form a helical membrane-spanning segment. Residues Leu261–Lys273 lie on the Extracellular side of the membrane. Residues Phe274 to Leu293 traverse the membrane as a helical segment. Over Arg294–Ile320 the chain is Cytoplasmic.

This sequence belongs to the G-protein coupled receptor 1 family.

The protein resides in the cell membrane. Its function is as follows. Odorant receptor. The protein is Olfactory receptor 2C3 (OR2C3) of Homo sapiens (Human).